Here is a 103-residue protein sequence, read N- to C-terminus: Small ribosomal subunit protein uS10 (103 aa).

It belongs to the universal ribosomal protein uS10 family. Part of the 30S ribosomal subunit.

In terms of biological role, involved in the binding of tRNA to the ribosomes. The polypeptide is Small ribosomal subunit protein uS10 (Saccharophagus degradans (strain 2-40 / ATCC 43961 / DSM 17024)).